Here is a 304-residue protein sequence, read N- to C-terminus: Acetyl-coenzyme A carboxylase carboxyl transferase subunit beta (304 aa).

The CoA carboxyltransferase N-terminal domain maps to 23–292; sequence VWTKCDSCGQ…PNPEAPREGV (270 aa). Residues cysteine 27, cysteine 30, cysteine 46, and cysteine 49 each coordinate Zn(2+). The segment at 27–49 adopts a C4-type zinc-finger fold; the sequence is CDSCGQVLYRAELERNLEVCPKC. The segment at 284–304 is disordered; sequence NPEAPREGVVVPPVPDQEPEA. The span at 295 to 304 shows a compositional bias: pro residues; it reads PPVPDQEPEA.

Belongs to the AccD/PCCB family. Acetyl-CoA carboxylase is a heterohexamer composed of biotin carboxyl carrier protein (AccB), biotin carboxylase (AccC) and two subunits each of ACCase subunit alpha (AccA) and ACCase subunit beta (AccD). Requires Zn(2+) as cofactor.

The protein resides in the cytoplasm. It catalyses the reaction N(6)-carboxybiotinyl-L-lysyl-[protein] + acetyl-CoA = N(6)-biotinyl-L-lysyl-[protein] + malonyl-CoA. It functions in the pathway lipid metabolism; malonyl-CoA biosynthesis; malonyl-CoA from acetyl-CoA: step 1/1. Functionally, component of the acetyl coenzyme A carboxylase (ACC) complex. Biotin carboxylase (BC) catalyzes the carboxylation of biotin on its carrier protein (BCCP) and then the CO(2) group is transferred by the transcarboxylase to acetyl-CoA to form malonyl-CoA. The protein is Acetyl-coenzyme A carboxylase carboxyl transferase subunit beta of Shigella boydii serotype 4 (strain Sb227).